The following is a 273-amino-acid chain: SUMO-1 cysteine protease S273R (273 aa).

Catalysis depends on residues His-168 and Asn-187. Gln-226 serves as a coordination point for substrate. Cys-232 acts as the Nucleophile in catalysis.

Belongs to the peptidase C63 family.

It localises to the host cytoplasm. The protein localises to the virion. Functionally, cysteine protease that plays several role during infection including processing of the structural polyprotein or inhibition of the host immune response. Catalyzes the maturation of the pp220 and pp62 polyprotein precursors into core-shell proteins. Plays a role in the disruption of host pyroptosis via specific cleavage of gasdermin D/GSDMD. In addition, strongly decreases the host cGAS-STING signaling by targeting IKBKE via its enzymatic activity. Also impairs host FOXJ1-mediated antiviral effect via degradation of FOXJ1. The protein is SUMO-1 cysteine protease S273R of Ornithodoros (relapsing fever ticks).